The primary structure comprises 173 residues: Shikimate kinase (173 aa).

Residue 12–17 (GSGKTT) coordinates ATP. Thr-16 is a binding site for Mg(2+). The substrate site is built by Asp-34, Arg-58, and Gly-80. ATP is bound at residue Arg-118. Substrate is bound at residue Arg-136.

Belongs to the shikimate kinase family. Monomer. Mg(2+) serves as cofactor.

The protein localises to the cytoplasm. It carries out the reaction shikimate + ATP = 3-phosphoshikimate + ADP + H(+). Its pathway is metabolic intermediate biosynthesis; chorismate biosynthesis; chorismate from D-erythrose 4-phosphate and phosphoenolpyruvate: step 5/7. Its function is as follows. Catalyzes the specific phosphorylation of the 3-hydroxyl group of shikimic acid using ATP as a cosubstrate. This is Shikimate kinase from Moorella thermoacetica (strain ATCC 39073 / JCM 9320).